We begin with the raw amino-acid sequence, 66 residues long: Large ribosomal subunit protein eL24 (66 aa).

Cys-6, Cys-9, Cys-32, and Cys-36 together coordinate Zn(2+). The segment at 6–36 (CSFCGKTIEPGTGIMYVRKDGAILYFCSNKC) adopts a C4-type zinc-finger fold.

Belongs to the eukaryotic ribosomal protein eL24 family. As to quaternary structure, part of the 50S ribosomal subunit. Forms a cluster with proteins L3 and L14. Requires Zn(2+) as cofactor.

In terms of biological role, binds to the 23S rRNA. The protein is Large ribosomal subunit protein eL24 of Thermoplasma volcanium (strain ATCC 51530 / DSM 4299 / JCM 9571 / NBRC 15438 / GSS1).